The following is a 208-amino-acid chain: Large ribosomal subunit protein uL4 (208 aa).

The protein belongs to the universal ribosomal protein uL4 family. As to quaternary structure, part of the 50S ribosomal subunit.

Its function is as follows. One of the primary rRNA binding proteins, this protein initially binds near the 5'-end of the 23S rRNA. It is important during the early stages of 50S assembly. It makes multiple contacts with different domains of the 23S rRNA in the assembled 50S subunit and ribosome. In terms of biological role, forms part of the polypeptide exit tunnel. This Anaplasma marginale (strain Florida) protein is Large ribosomal subunit protein uL4.